The chain runs to 202 residues: NADH-quinone oxidoreductase subunit C (202 aa).

The protein belongs to the complex I 30 kDa subunit family. As to quaternary structure, NDH-1 is composed of 14 different subunits. Subunits NuoB, C, D, E, F, and G constitute the peripheral sector of the complex.

Its subcellular location is the cell inner membrane. The catalysed reaction is a quinone + NADH + 5 H(+)(in) = a quinol + NAD(+) + 4 H(+)(out). In terms of biological role, NDH-1 shuttles electrons from NADH, via FMN and iron-sulfur (Fe-S) centers, to quinones in the respiratory chain. The immediate electron acceptor for the enzyme in this species is believed to be ubiquinone. Couples the redox reaction to proton translocation (for every two electrons transferred, four hydrogen ions are translocated across the cytoplasmic membrane), and thus conserves the redox energy in a proton gradient. The polypeptide is NADH-quinone oxidoreductase subunit C (Paracidovorax citrulli (strain AAC00-1) (Acidovorax citrulli)).